The sequence spans 333 residues: GTP 3',8-cyclase (333 aa).

Residues 7-221 (KFGRVHDYIR…FEACNEAGYE (215 aa)) form the Radical SAM core domain. Arg16 lines the GTP pocket. [4Fe-4S] cluster is bound by residues Cys23 and Cys27. Residue Tyr29 participates in S-adenosyl-L-methionine binding. Cys30 is a [4Fe-4S] cluster binding site. A GTP-binding site is contributed by Arg66. Gly70 contributes to the S-adenosyl-L-methionine binding site. Thr97 serves as a coordination point for GTP. Residue Ser121 coordinates S-adenosyl-L-methionine. A GTP-binding site is contributed by Lys158. Met192 lines the S-adenosyl-L-methionine pocket. Cys257 and Cys260 together coordinate [4Fe-4S] cluster. Residue 262–264 (RLR) participates in GTP binding. Cys274 serves as a coordination point for [4Fe-4S] cluster.

The protein belongs to the radical SAM superfamily. MoaA family. Monomer and homodimer. The cofactor is [4Fe-4S] cluster.

The enzyme catalyses GTP + AH2 + S-adenosyl-L-methionine = (8S)-3',8-cyclo-7,8-dihydroguanosine 5'-triphosphate + 5'-deoxyadenosine + L-methionine + A + H(+). Its pathway is cofactor biosynthesis; molybdopterin biosynthesis. Functionally, catalyzes the cyclization of GTP to (8S)-3',8-cyclo-7,8-dihydroguanosine 5'-triphosphate. In Listeria monocytogenes serovar 1/2a (strain ATCC BAA-679 / EGD-e), this protein is GTP 3',8-cyclase.